Consider the following 122-residue polypeptide: Histone H2B.2 (122 aa).

Low complexity predominate over residues 1–10 (MAPKKAPAAT). The segment at 1-28 (MAPKKAPAATTEKKVKKAPTTEKKNKKK) is disordered. A2 is modified (n,N,N-trimethylalanine). K5 and K42 each carry N6-acetyllysine. A Glycyl lysine isopeptide (Lys-Gly) (interchain with G-Cter in ubiquitin) cross-link involves residue K116.

The protein belongs to the histone H2B family. In terms of assembly, the nucleosome is a histone octamer containing two molecules each of H2A, H2B, H3 and H4 assembled in one H3-H4 heterotetramer and two H2A-H2B heterodimers. The octamer wraps approximately 147 bp of DNA. Post-translationally, acetylation occurs almost exclusively in the MAC. In terms of processing, monoubiquitination to form H2BK115ub1 gives a specific tag for epigenetic transcriptional activation and is also prerequisite for H3K4me and H3K79me formation.

The protein localises to the nucleus. Its subcellular location is the chromosome. Functionally, core component of nucleosome. Nucleosomes wrap and compact DNA into chromatin, limiting DNA accessibility to the cellular machineries which require DNA as a template. Histones thereby play a central role in transcription regulation, DNA repair, DNA replication and chromosomal stability. DNA accessibility is regulated via a complex set of post-translational modifications of histones, also called histone code, and nucleosome remodeling. The chain is Histone H2B.2 (HTB2) from Tetrahymena thermophila (strain SB210).